Reading from the N-terminus, the 97-residue chain is Large ribosomal subunit protein bL27 (97 aa).

Positions 1–12 (MLKMNLANLQLF) are excised as a propeptide. The tract at residues 14–38 (HKKGGGSTSNGRDSESKRLGAKAAD) is disordered.

It belongs to the bacterial ribosomal protein bL27 family. In terms of processing, the N-terminus is cleaved by ribosomal processing cysteine protease Prp.

The sequence is that of Large ribosomal subunit protein bL27 from Streptococcus mutans serotype c (strain ATCC 700610 / UA159).